The primary structure comprises 305 residues: Alpha-N-acetylgalactosaminide alpha-2,6-sialyltransferase 3 (305 aa).

The Cytoplasmic portion of the chain corresponds to 1–8 (MACILKRK). A helical; Signal-anchor for type II membrane protein membrane pass occupies residues 9 to 28 (SVIAVSFIAAFLFLLVVRLV). Residues 29 to 305 (NEVNFPLLLN…IFTHPNWTLS (277 aa)) lie on the Lumenal side of the membrane. C80 and C229 are oxidised to a cystine. N-linked (GlcNAc...) asparagine glycans are attached at residues N148, N239, and N301.

This sequence belongs to the glycosyltransferase 29 family. Expressed in brain and kidney. Observed in the epithelium of the proximal tubules, marginal expression was also found in the distal tubules and collecting tubules.

It is found in the golgi apparatus membrane. It catalyses the reaction an alpha-Neu5Ac-(2-&gt;3)-beta-D-Gal-(1-&gt;3)-D-GlcNAc derivative + CMP-N-acetyl-beta-neuraminate = an alpha-Neu5Ac-(2-&gt;3)-beta-D-Gal-(1-&gt;3)-[alpha-Neu5Ac-(2-&gt;6)]-D-GlcNAc derivative + CMP + H(+). It carries out the reaction a ganglioside GM1b (d18:1(4E)) + CMP-N-acetyl-beta-neuraminate = a ganglioside GD1alpha (d18:1(4E)) + CMP + H(+). The catalysed reaction is a globoside MSGG + CMP-N-acetyl-beta-neuraminate = a globoside DSGG + CMP + H(+). The enzyme catalyses 3-O-[alpha-Neu5Ac-(2-&gt;3)-beta-D-Gal-(1-&gt;3)-alpha-D-GalNAc]-L-Ser-[protein] + CMP-N-acetyl-beta-neuraminate = a 3-O-{alpha-Neu5Ac-(2-&gt;3)-beta-D-Gal-(1-&gt;3)-[alpha-Neu5Ac-(2-&gt;6)]-alpha-D-GalNAc}-L-seryl-[protein] + CMP + H(+). It catalyses the reaction 3-O-[alpha-Neu5Ac-(2-&gt;3)-beta-D-Gal-(1-&gt;3)-alpha-D-GalNAc]-L-Thr-[protein] + CMP-N-acetyl-beta-neuraminate = a 3-O-{alpha-Neu5Ac-(2-&gt;3)-beta-D-Gal-(1-&gt;3)-[alpha-Neu5Ac-(2-&gt;6)]-alpha-D-GalNAc}-L-threonyl-[protein] + CMP + H(+). Its pathway is protein modification; protein glycosylation. The protein operates within glycolipid biosynthesis. Transfers the sialyl group (N-acetyl-alpha-neuraminyl or NeuAc) from CMP-NeuAc to the GalNAc residue on the NeuAc-alpha-2,3-Gal-beta-1,3-GalNAc sequence of glycoproteins and glycolipids forming an alpha-2,6-linkage. Produces branched type disialyl structures by transfer of a sialyl group onto a GalNAc residue inside the backbone core chains. ST6GalNAcIII prefers glycolipids to glycoproteins, predominantly catalyzing the biosynthesis of ganglioside GD1alpha from GM1b. GD1alpha is a critical molecule in the communication and interaction between neuronal cells and their supportive cells, particularly in brain tissues, and functions as an adhesion molecule in the process of metastasis. Sialylation of glycoproteins or glycosphingolipids is very important in tumor development, neuronal development, nerve repair, immunological processes and regulation of hormone sensitivity. The polypeptide is Alpha-N-acetylgalactosaminide alpha-2,6-sialyltransferase 3 (ST6GALNAC3) (Homo sapiens (Human)).